The sequence spans 737 residues: Zinc finger protein 280C (737 aa).

Glycyl lysine isopeptide (Lys-Gly) (interchain with G-Cter in SUMO2) cross-links involve residues K5, K10, K14, K33, and K55. Polar residues predominate over residues 57-66 (AISNILNRGH). The tract at residues 57-137 (AISNILNRGH…DFTKNSQVGS (81 aa)) is disordered. K75 participates in a covalent cross-link: Glycyl lysine isopeptide (Lys-Gly) (interchain with G-Cter in SUMO2). S80 carries the post-translational modification Phosphoserine. Positions 112–123 (SKSSQSSVTVEN) are enriched in polar residues. Residues K113, K126, K167, K174, K180, and K187 each participate in a glycyl lysine isopeptide (Lys-Gly) (interchain with G-Cter in SUMO2) cross-link. Positions 176–185 (PSTSKVNSVT) are enriched in polar residues. Residues 176–223 (PSTSKVNSVTPKKPKTSEDVPQINPSTSLPLIGSPPVTSSQVMLSKGT) are disordered. The span at 211–223 (PVTSSQVMLSKGT) shows a compositional bias: polar residues. Residue T223 is modified to Phosphothreonine. S227 is modified (phosphoserine). K273 participates in a covalent cross-link: Glycyl lysine isopeptide (Lys-Gly) (interchain with G-Cter in SUMO2). 5 C2H2-type zinc fingers span residues 316–338 (FKCFSCSKVLKNNIRFMNHMKHH), 353–376 (TTCQHCYRQYPTPFQLQCHIESTH), 383–406 (TICKICELSFETEHILLQHMKDTH), 413–436 (YVCQVCQFRSSTFSDVEAHFRAAH), and 470–492 (HRCPKCRLQFLTSKEKAEHKAQH). K522 participates in a covalent cross-link: Glycyl lysine isopeptide (Lys-Gly) (interchain with G-Cter in SUMO2). Polar residues predominate over residues 535–579 (SFLQVTPPTSQNTTARNPRKSNASRSKTSKLHATTSTASKVNTSK). Residues 535 to 602 (SFLQVTPPTS…YKQKRQRNRK (68 aa)) are disordered. T540 is subject to Phosphothreonine. Glycyl lysine isopeptide (Lys-Gly) (interchain with G-Cter in SUMO2) cross-links involve residues K564 and K574. Residues 580–602 (PRGRIAKSKAKPSYKQKRQRNRK) show a composition bias toward basic residues.

It is found in the nucleus. Its function is as follows. May function as a transcription factor. This chain is Zinc finger protein 280C (ZNF280C), found in Homo sapiens (Human).